The following is a 409-amino-acid chain: Tyrosine--tRNA ligase (409 aa).

The 'HIGH' region motif lies at 43–52 (PTAPDLHLGH). A 'KMSKS' region motif is present at residues 227-231 (KMSKS). K230 is an ATP binding site. The region spanning 338-399 (LALPQLLKLA…GKRKFAKVTL (62 aa)) is the S4 RNA-binding domain.

This sequence belongs to the class-I aminoacyl-tRNA synthetase family. TyrS type 2 subfamily. In terms of assembly, homodimer.

Its subcellular location is the cytoplasm. The catalysed reaction is tRNA(Tyr) + L-tyrosine + ATP = L-tyrosyl-tRNA(Tyr) + AMP + diphosphate + H(+). Functionally, catalyzes the attachment of tyrosine to tRNA(Tyr) in a two-step reaction: tyrosine is first activated by ATP to form Tyr-AMP and then transferred to the acceptor end of tRNA(Tyr). The polypeptide is Tyrosine--tRNA ligase (Nitrosomonas europaea (strain ATCC 19718 / CIP 103999 / KCTC 2705 / NBRC 14298)).